The following is a 283-amino-acid chain: Cyclin-C (283 aa).

Residues 46 to 144 (NVIQALGEHL…ILECEFYLLE (99 aa)) form the Cyclin N-terminal domain. The interval 252 to 283 (TILSKMPKPKPPPNSEGEQGPNGSQNSSYSQS) is disordered. Residues 272 to 283 (PNGSQNSSYSQS) show a composition bias toward polar residues. Phosphoserine is present on Ser275.

The protein belongs to the cyclin family. Cyclin C subfamily. Component of the Mediator complex, which is composed of MED1, MED4, MED6, MED7, MED8, MED9, MED10, MED11, MED12, MED13, MED13L, MED14, MED15, MED16, MED17, MED18, MED19, MED20, MED21, MED22, MED23, MED24, MED25, MED26, MED27, MED29, MED30, MED31, CCNC, CDK8 and CDC2L6/CDK11. The MED12, MED13, CCNC and CDK8 subunits form a distinct module termed the CDK8 module. Mediator containing the CDK8 module is less active than Mediator lacking this module in supporting transcriptional activation. Individual preparations of the Mediator complex lacking one or more distinct subunits have been variously termed ARC, CRSP, DRIP, PC2, SMCC and TRAP. The cylin/CDK pair formed by CCNC/CDK8 also associates with the large subunit of RNA polymerase II. In terms of tissue distribution, highest levels in pancreas. High levels in heart, liver, skeletal muscle and kidney. Low levels in brain.

It localises to the nucleus. Component of the Mediator complex, a coactivator involved in regulated gene transcription of nearly all RNA polymerase II-dependent genes. Mediator functions as a bridge to convey information from gene-specific regulatory proteins to the basal RNA polymerase II transcription machinery. Mediator is recruited to promoters by direct interactions with regulatory proteins and serves as a scaffold for the assembly of a functional preinitiation complex with RNA polymerase II and the general transcription factors. Binds to and activates cyclin-dependent kinase CDK8 that phosphorylates the CTD (C-terminal domain) of the large subunit of RNA polymerase II (RNAp II), which may inhibit the formation of a transcription initiation complex. This Homo sapiens (Human) protein is Cyclin-C (CCNC).